Here is a 76-residue protein sequence, read N- to C-terminus: Acyl carrier protein (76 aa).

One can recognise a Carrier domain in the interval 1–76; the sequence is MATFDKVKDI…DVVNYIEQNQ (76 aa). The residue at position 36 (Ser36) is an O-(pantetheine 4'-phosphoryl)serine.

Belongs to the acyl carrier protein (ACP) family. Post-translationally, 4'-phosphopantetheine is transferred from CoA to a specific serine of apo-ACP by AcpS. This modification is essential for activity because fatty acids are bound in thioester linkage to the sulfhydryl of the prosthetic group.

The protein localises to the cytoplasm. It functions in the pathway lipid metabolism; fatty acid biosynthesis. In terms of biological role, carrier of the growing fatty acid chain in fatty acid biosynthesis. This is Acyl carrier protein from Natranaerobius thermophilus (strain ATCC BAA-1301 / DSM 18059 / JW/NM-WN-LF).